Here is an 842-residue protein sequence, read N- to C-terminus: Elongation factor 2 (842 aa).

Positions 17 to 253 (TNVRNMSVIA…LWGDSYFNPK (237 aa)) constitute a tr-type G domain. GTP-binding positions include 26-33 (AHVDHGKS), 158-161 (NKVD), and 213-215 (SGL). Histidine 699 is subject to Diphthamide.

This sequence belongs to the TRAFAC class translation factor GTPase superfamily. Classic translation factor GTPase family. EF-G/EF-2 subfamily.

The protein resides in the cytoplasm. The catalysed reaction is GTP + H2O = GDP + phosphate + H(+). Catalyzes the GTP-dependent ribosomal translocation step during translation elongation. During this step, the ribosome changes from the pre-translocational (PRE) to the post-translocational (POST) state as the newly formed A-site-bound peptidyl-tRNA and P-site-bound deacylated tRNA move to the P and E sites, respectively. Catalyzes the coordinated movement of the two tRNA molecules, the mRNA and conformational changes in the ribosome. The sequence is that of Elongation factor 2 (EFT1) from Eremothecium gossypii (strain ATCC 10895 / CBS 109.51 / FGSC 9923 / NRRL Y-1056) (Yeast).